Here is a 121-residue protein sequence, read N- to C-terminus: Neuromedin-B (121 aa).

A signal peptide spans Met1–Val24. Met56 is modified (methionine amide). The propeptide occupies Ser60 to Lys121.

It belongs to the bombesin/neuromedin-B/ranatensin family.

It is found in the secreted. It localises to the cell projection. The protein localises to the neuron projection. Functionally, stimulates smooth muscle contraction. Induces sighing by acting directly on the pre-Botzinger complex, a cluster of several thousand neurons in the ventrolateral medulla responsible for inspiration during respiratory activity. Contributes to the induction of sneezing following exposure to chemical irritants or allergens which causes release of NMB by nasal sensory neurons and activation of NMBR-expressing neurons in the sneeze-evoking region of the brainstem. These in turn activate neurons of the caudal ventral respiratory group, giving rise to the sneezing response. Contributes to induction of acute itch, possibly through activation of the NMBR receptor on dorsal root ganglion neurons. Increases expression of NMBR and steroidogenic mediators STAR, CYP11A1 and HSD3B1 in Leydig cells, induces secretion of testosterone by Leydig cells and also promotes Leydig cell proliferation. Plays a role in the innate immune response to influenza A virus infection by enhancing interferon alpha expression and reducing expression of IL6. Plays a role in CSF1-induced proliferation of osteoclast precursors by contributing to the positive regulation of the expression of the CSF1 receptor CSF1R. The polypeptide is Neuromedin-B (NMB) (Homo sapiens (Human)).